A 425-amino-acid chain; its full sequence is uncharacterized protein (425 aa).

One can recognise a TRAM domain in the interval 1-57 (MKDKPLKLTVEKLVYGGYGFSRLNGKAVFVRFASPKELVEAKVVKEKKDYTEAVVTK). 4 residues coordinate [4Fe-4S] cluster: Cys-70, Cys-76, Cys-79, and Cys-153. 3 residues coordinate S-adenosyl-L-methionine: Gln-260, Asp-308, and Asp-354. Residue Cys-381 is the Nucleophile of the active site.

Belongs to the class I-like SAM-binding methyltransferase superfamily. RNA M5U methyltransferase family.

This is an uncharacterized protein from Aquifex aeolicus (strain VF5).